The primary structure comprises 238 residues: Trypsin-3 (238 aa).

A signal peptide spans 1-7; it reads FAVAFAA. Residues 8 to 15 constitute a propeptide, activation peptide; the sequence is PIDDEDDK. The 221-residue stretch at 16–236 folds into the Peptidase S1 domain; it reads IVGGYECRKN…YRSWISSTMS (221 aa). Cystine bridges form between Cys22/Cys152, Cys40/Cys56, Cys124/Cys225, Cys131/Cys198, Cys163/Cys177, and Cys188/Cys212. The active-site Charge relay system is the His55. Ca(2+) contacts are provided by Glu67, Asn69, Val72, and Glu77. The active-site Charge relay system is the Asp99. Ser192 functions as the Charge relay system in the catalytic mechanism.

The protein belongs to the peptidase S1 family. Requires Ca(2+) as cofactor.

The protein resides in the secreted. It is found in the extracellular space. It catalyses the reaction Preferential cleavage: Arg-|-Xaa, Lys-|-Xaa.. The sequence is that of Trypsin-3 from Salmo salar (Atlantic salmon).